A 320-amino-acid chain; its full sequence is Endolytic peptidoglycan transglycosylase RlpA (320 aa).

Belongs to the RlpA family.

Lytic transglycosylase with a strong preference for naked glycan strands that lack stem peptides. The protein is Endolytic peptidoglycan transglycosylase RlpA of Rickettsia typhi (strain ATCC VR-144 / Wilmington).